The primary structure comprises 142 residues: Transcriptional regulator MraZ (142 aa).

2 consecutive SpoVT-AbrB domains span residues 5–51 (ASSL…PRPV) and 77–120 (ASDV…DATK).

Belongs to the MraZ family. Forms oligomers.

The protein localises to the cytoplasm. Its subcellular location is the nucleoid. This is Transcriptional regulator MraZ from Janthinobacterium sp. (strain Marseille) (Minibacterium massiliensis).